The following is a 462-amino-acid chain: UDP-N-acetylmuramate--L-alanine ligase (462 aa).

Position 112–118 (112–118 (GTHGKTT)) interacts with ATP.

This sequence belongs to the MurCDEF family.

Its subcellular location is the cytoplasm. It carries out the reaction UDP-N-acetyl-alpha-D-muramate + L-alanine + ATP = UDP-N-acetyl-alpha-D-muramoyl-L-alanine + ADP + phosphate + H(+). Its pathway is cell wall biogenesis; peptidoglycan biosynthesis. In terms of biological role, cell wall formation. The protein is UDP-N-acetylmuramate--L-alanine ligase of Geobacter sulfurreducens (strain ATCC 51573 / DSM 12127 / PCA).